Here is a 154-residue protein sequence, read N- to C-terminus: Ascorbate-specific PTS system EIIA component (154 aa).

In terms of domain architecture, PTS EIIA type-2 spans 6 to 150 (SLAVNKSIRL…QEVLDLIDRT (145 aa)). The active-site Tele-phosphohistidine intermediate is His-68. The residue at position 68 (His-68) is a Phosphohistidine.

The protein localises to the cytoplasm. The phosphoenolpyruvate-dependent sugar phosphotransferase system (sugar PTS), a major carbohydrate active transport system, catalyzes the phosphorylation of incoming sugar substrates concomitantly with their translocation across the cell membrane. The enzyme II UlaABC PTS system is involved in ascorbate transport. In Shigella dysenteriae serotype 1 (strain Sd197), this protein is Ascorbate-specific PTS system EIIA component (ulaC).